The chain runs to 1066 residues: Zinc finger and BTB domain-containing protein 21 (1066 aa).

The BTB domain maps to 30–96 (CDVLLIVGDQ…IYSSSLFVEK (67 aa)). The segment at 30–96 (CDVLLIVGDQ…IYSSSLFVEK (67 aa)) is mediates homodimerization. Lys40 is covalently cross-linked (Glycyl lysine isopeptide (Lys-Gly) (interchain with G-Cter in SUMO1); alternate). Residue Lys40 forms a Glycyl lysine isopeptide (Lys-Gly) (interchain with G-Cter in SUMO2); alternate linkage. The segment covering 154–177 (SRNEAQGKTVSQNQPDVSHTSRPS) has biased composition (polar residues). Residues 154–196 (SRNEAQGKTVSQNQPDVSHTSRPSPSIAVKANTNKPHVPKPIE) form a disordered region. Residues Lys255, Lys266, Lys273, Lys312, and Lys337 each participate in a glycyl lysine isopeptide (Lys-Gly) (interchain with G-Cter in SUMO2) cross-link. 2 positions are modified to phosphoserine: Ser345 and Ser381. Lys383 participates in a covalent cross-link: Glycyl lysine isopeptide (Lys-Gly) (interchain with G-Cter in SUMO2). The segment covering 388–399 (DCSEKTALDDRP) has biased composition (basic and acidic residues). Disordered regions lie at residues 388 to 442 (DCSE…DPSD), 454 to 485 (TAAA…AKRR), and 498 to 525 (KVNE…ADFP). Phosphoserine occurs at positions 411 and 422. Residue Lys430 forms a Glycyl lysine isopeptide (Lys-Gly) (interchain with G-Cter in SUMO2) linkage. A Phosphothreonine modification is found at Thr431. Phosphoserine is present on residues Ser434, Ser435, and Ser438. Over residues 466–478 (LSLKTEDDQKDMS) the composition is skewed to basic and acidic residues. Glycyl lysine isopeptide (Lys-Gly) (interchain with G-Cter in SUMO2) cross-links involve residues Lys469 and Lys475. 2 consecutive C2H2-type zinc fingers follow at residues 546–569 (FKCK…NMYH) and 575–598 (YACD…QTQH). Ser605 bears the Phosphoserine mark. Glycyl lysine isopeptide (Lys-Gly) (interchain with G-Cter in SUMO2) cross-links involve residues Lys617, Lys643, and Lys659. A C2H2-type 3 zinc finger spans residues 670–692 (YICTYCGKAYRFLSQFKQHIKMH). A Glycyl lysine isopeptide (Lys-Gly) (interchain with G-Cter in SUMO2) cross-link involves residue Lys702. Ser714 bears the Phosphoserine mark. Residues 748 to 770 (AVCPYCSLRFFSPELKQEHESKC) form a C2H2-type 4; atypical zinc finger. Glycyl lysine isopeptide (Lys-Gly) (interchain with G-Cter in SUMO2) cross-links involve residues Lys763 and Lys785. The C2H2-type 5 zinc finger occupies 775 to 798 (LTCLECMRTFKSSFSIWRHQVEVH). The interval 806–840 (TENFSLPVLDHNGDVTGSSRPQSQPEPNKVNHIVT) is disordered. Positions 820-831 (VTGSSRPQSQPE) are enriched in polar residues. A Glycyl lysine isopeptide (Lys-Gly) (interchain with G-Cter in SUMO2) cross-link involves residue Lys875. Residue Lys879 forms a Glycyl lysine isopeptide (Lys-Gly) (interchain with G-Cter in SUMO1); alternate linkage. Residue Lys879 forms a Glycyl lysine isopeptide (Lys-Gly) (interchain with G-Cter in SUMO2); alternate linkage. The disordered stretch occupies residues 879 to 906 (KEEPVEEAEEEAPEASTAPKEAGPSKEA). Acidic residues predominate over residues 882-891 (PVEEAEEEAP). The C2H2-type 6; atypical zinc finger occupies 909 to 932 (WPCEKCGKMFTVHKQLERHQELLC). Lys935 is covalently cross-linked (Glycyl lysine isopeptide (Lys-Gly) (interchain with G-Cter in SUMO2)). The C2H2-type 7 zinc-finger motif lies at 937 to 959 (FICHVCNKAFRTNFRLWSHFQSH). Positions 963 to 1014 (ASEESAHKESEVCPVPTNSPSPPPLPPPPPLPKIQPLEPDSPTGLSENPTPA) are disordered. The span at 979–995 (TNSPSPPPLPPPPPLPK) shows a compositional bias: pro residues. Ser1003 carries the phosphoserine modification. The segment at 1043-1065 (FMCKLCHRTFKTAFSLWSHEQTH) adopts a C2H2-type 8 zinc-finger fold.

Homodimer. Interacts with ZBTB14. In terms of tissue distribution, ubiquitous in fetal and adult tissues.

The protein localises to the nucleus. Functionally, acts as a transcription repressor. In Homo sapiens (Human), this protein is Zinc finger and BTB domain-containing protein 21 (ZBTB21).